A 137-amino-acid polypeptide reads, in one-letter code: Large ribosomal subunit protein uL16c (137 aa).

The protein belongs to the universal ribosomal protein uL16 family. In terms of assembly, part of the 50S ribosomal subunit.

It localises to the plastid. It is found in the chloroplast. In Hordeum vulgare (Barley), this protein is Large ribosomal subunit protein uL16c.